Consider the following 675-residue polypeptide: DNA ligase (675 aa).

Residues 41 to 45, 90 to 91, and glutamate 120 contribute to the NAD(+) site; these read DAEYD and SL. Residue lysine 122 is the N6-AMP-lysine intermediate of the active site. NAD(+) is bound by residues arginine 143, glutamate 178, lysine 295, and lysine 319. Positions 413, 416, 431, and 436 each coordinate Zn(2+). The BRCT domain maps to 596-675; that stretch reads GVPQTFAGKT…ADFLQLIDRV (80 aa).

This sequence belongs to the NAD-dependent DNA ligase family. LigA subfamily. It depends on Mg(2+) as a cofactor. The cofactor is Mn(2+).

It catalyses the reaction NAD(+) + (deoxyribonucleotide)n-3'-hydroxyl + 5'-phospho-(deoxyribonucleotide)m = (deoxyribonucleotide)n+m + AMP + beta-nicotinamide D-nucleotide.. In terms of biological role, DNA ligase that catalyzes the formation of phosphodiester linkages between 5'-phosphoryl and 3'-hydroxyl groups in double-stranded DNA using NAD as a coenzyme and as the energy source for the reaction. It is essential for DNA replication and repair of damaged DNA. This is DNA ligase from Heliobacterium modesticaldum (strain ATCC 51547 / Ice1).